The primary structure comprises 325 residues: ATP synthase gamma chain (325 aa).

The protein belongs to the ATPase gamma chain family. As to quaternary structure, F-type ATPases have 2 components, CF(1) - the catalytic core - and CF(0) - the membrane proton channel. CF(1) has five subunits: alpha(3), beta(3), gamma(1), delta(1), epsilon(1). CF(0) has three main subunits: a, b and c.

It localises to the cell membrane. Produces ATP from ADP in the presence of a proton gradient across the membrane. The gamma chain is believed to be important in regulating ATPase activity and the flow of protons through the CF(0) complex. The chain is ATP synthase gamma chain from Corynebacterium glutamicum (strain R).